The following is a 238-amino-acid chain: MSNPLLVCQGIRKVYQEGAMETEVLKGVDFQINGSELVAIVGSSGSGKSTLLHILGALDEPTAGTVHFQENELTKLSANKQAKIRNQHIGFVYQFHHLLADFSALENVAMPLLIGGVNKKEAAKRATELLEKVGLAHRIEHRPSELSGGERQRVAIARALVNKPALVLADEPTGNLDHKTALDIYNLMRELNQESGTAFLVVTHDNELAAKLDKQLSMQDGRFITETVRSSLAQEMEA.

The ABC transporter domain maps to 6–238 (LVCQGIRKVY…RSSLAQEMEA (233 aa)). 42–49 (GSSGSGKS) contacts ATP.

This sequence belongs to the ABC transporter superfamily. Lipoprotein translocase (TC 3.A.1.125) family. In terms of assembly, the complex is composed of two ATP-binding proteins (LolD) and two transmembrane proteins (LolC and LolE).

The protein localises to the cell inner membrane. Its function is as follows. Part of the ABC transporter complex LolCDE involved in the translocation of mature outer membrane-directed lipoproteins, from the inner membrane to the periplasmic chaperone, LolA. Responsible for the formation of the LolA-lipoprotein complex in an ATP-dependent manner. The chain is Lipoprotein-releasing system ATP-binding protein LolD from Aliivibrio fischeri (strain ATCC 700601 / ES114) (Vibrio fischeri).